A 335-amino-acid polypeptide reads, in one-letter code: Biotin synthase (335 aa).

The Radical SAM core domain maps to K41–R269. C56, C60, and C63 together coordinate [4Fe-4S] cluster. [2Fe-2S] cluster-binding residues include C100, C132, C192, and R264.

It belongs to the radical SAM superfamily. Biotin synthase family. Homodimer. It depends on [4Fe-4S] cluster as a cofactor. [2Fe-2S] cluster serves as cofactor.

The catalysed reaction is (4R,5S)-dethiobiotin + (sulfur carrier)-SH + 2 reduced [2Fe-2S]-[ferredoxin] + 2 S-adenosyl-L-methionine = (sulfur carrier)-H + biotin + 2 5'-deoxyadenosine + 2 L-methionine + 2 oxidized [2Fe-2S]-[ferredoxin]. The protein operates within cofactor biosynthesis; biotin biosynthesis; biotin from 7,8-diaminononanoate: step 2/2. Its function is as follows. Catalyzes the conversion of dethiobiotin (DTB) to biotin by the insertion of a sulfur atom into dethiobiotin via a radical-based mechanism. The polypeptide is Biotin synthase (Nostoc sp. (strain PCC 7120 / SAG 25.82 / UTEX 2576)).